The sequence spans 189 residues: HTH-type transcriptional repressor AcnR (189 aa).

The 61-residue stretch at 10 to 70 folds into the HTH tetR-type domain; sequence AERKVEILSG…EVAHEDMRKM (61 aa). Residues 33–52 constitute a DNA-binding region (H-T-H motif); it reads TVARLEETIGKSRGAIFHHY. Citrate is bound by residues 79–80, arginine 130, and glutamine 134; that span reads LI. Glutamate 181 serves as a coordination point for Mg(2+). Arginine 185 serves as a coordination point for citrate.

As to quaternary structure, homodimer.

Its function is as follows. AcnR negatively controls the expression of the aconitase gene acn. The sequence is that of HTH-type transcriptional repressor AcnR from Corynebacterium jeikeium (strain K411).